Reading from the N-terminus, the 303-residue chain is D-alanine--D-alanine ligase (303 aa).

The region spanning 99–293 (TYRFLKGTVE…FEELVEIILK (195 aa)) is the ATP-grasp domain. Residue 125–176 (GYPCVVKPRREGSSIGVFVCESDEEFQHALKEDLPRYGSVIVQKYIPGREMT) coordinates ATP. Positions 248, 260, and 262 each coordinate Mg(2+).

The protein belongs to the D-alanine--D-alanine ligase family. Requires Mg(2+) as cofactor. The cofactor is Mn(2+).

It is found in the cytoplasm. It catalyses the reaction 2 D-alanine + ATP = D-alanyl-D-alanine + ADP + phosphate + H(+). It functions in the pathway cell wall biogenesis; peptidoglycan biosynthesis. Functionally, cell wall formation. This is D-alanine--D-alanine ligase from Thermotoga maritima (strain ATCC 43589 / DSM 3109 / JCM 10099 / NBRC 100826 / MSB8).